We begin with the raw amino-acid sequence, 122 residues long: Ribosomal silencing factor RsfS (122 aa).

The protein belongs to the Iojap/RsfS family. As to quaternary structure, interacts with ribosomal protein uL14 (rplN).

Its subcellular location is the cytoplasm. Functionally, functions as a ribosomal silencing factor. Interacts with ribosomal protein uL14 (rplN), blocking formation of intersubunit bridge B8. Prevents association of the 30S and 50S ribosomal subunits and the formation of functional ribosomes, thus repressing translation. This is Ribosomal silencing factor RsfS from Chromobacterium violaceum (strain ATCC 12472 / DSM 30191 / JCM 1249 / CCUG 213 / NBRC 12614 / NCIMB 9131 / NCTC 9757 / MK).